The primary structure comprises 361 residues: Isocitrate dehydrogenase [NAD] subunit 1, mitochondrial (361 aa).

A mitochondrion-targeting transit peptide spans 1 to 12 (MLRQGIAAQKKS). Substrate contacts are provided by Arg-110, Arg-141, and Asp-229. Asp-229 provides a ligand contact to Mg(2+).

It belongs to the isocitrate and isopropylmalate dehydrogenases family. In terms of assembly, octamer of two non-identical subunits IDH1 and IDH2. The cofactor is Mg(2+). Mn(2+) serves as cofactor.

The protein resides in the mitochondrion. The catalysed reaction is D-threo-isocitrate + NAD(+) = 2-oxoglutarate + CO2 + NADH. In terms of biological role, performs an essential role in the oxidative function of the citric acid cycle. This is Isocitrate dehydrogenase [NAD] subunit 1, mitochondrial (IDH1) from Kluyveromyces lactis (strain ATCC 8585 / CBS 2359 / DSM 70799 / NBRC 1267 / NRRL Y-1140 / WM37) (Yeast).